The chain runs to 195 residues: Thioredoxin reductase-like selenoprotein T (195 aa).

The signal sequence occupies residues 1 to 19; it reads MRLLLLLLVAASAMVRSEA. A cross-link (cysteinyl-selenocysteine (Cys-Sec)) is located at residues 46–49; it reads CVSU. Residue Sec49 is a non-standard amino acid, selenocysteine. A helical transmembrane segment spans residues 85–103; it reads IASFLSVFKLVLIGLIIVG.

It belongs to the SelWTH family. Selenoprotein T subfamily. May contain a selenide-sulfide bond between Cys-46 and Sec-49. This bond is speculated to serve as redox-active pair. Ubiquitous. Highly expressed in the endocrine pancreas.

The protein localises to the endoplasmic reticulum membrane. It carries out the reaction [thioredoxin]-dithiol + NADP(+) = [thioredoxin]-disulfide + NADPH + H(+). In terms of biological role, selenoprotein with thioredoxin reductase-like oxidoreductase activity. Protects dopaminergic neurons against oxidative stress and cell death. Involved in ADCYAP1/PACAP-induced calcium mobilization and neuroendocrine secretion. Plays a role in fibroblast anchorage and redox regulation. In gastric smooth muscle, modulates the contraction processes through the regulation of calcium release and MYLK activation. In pancreatic islets, involved in the control of glucose homeostasis, contributes to prolonged ADCYAP1/PACAP-induced insulin secretion. This Homo sapiens (Human) protein is Thioredoxin reductase-like selenoprotein T.